Consider the following 239-residue polypeptide: Urease accessory protein UreE (239 aa).

The disordered stretch occupies residues 185–239; sequence VASPLDEPHGSGLHIHGIHSHGDGHSHSHDSHSHSHDSDHGHSHSHGDHDHDHKH. The span at 204–239 shows a compositional bias: basic and acidic residues; sequence SHGDGHSHSHDSHSHSHDSDHGHSHSHGDHDHDHKH.

Belongs to the UreE family.

The protein resides in the cytoplasm. Functionally, involved in urease metallocenter assembly. Binds nickel. Probably functions as a nickel donor during metallocenter assembly. This Yersinia frederiksenii protein is Urease accessory protein UreE.